Consider the following 284-residue polypeptide: Formamidopyrimidine-DNA glycosylase (284 aa).

Catalysis depends on Pro-2, which acts as the Schiff-base intermediate with DNA. Glu-3 functions as the Proton donor in the catalytic mechanism. Lys-59 functions as the Proton donor; for beta-elimination activity in the catalytic mechanism. His-94 and Arg-113 together coordinate DNA. The FPG-type zinc finger occupies 239–273 (KVHTKKDQPCSVCNQLIVKKKINGRGSYFCLNCQK). Catalysis depends on Arg-263, which acts as the Proton donor; for delta-elimination activity.

This sequence belongs to the FPG family. In terms of assembly, monomer. Zn(2+) is required as a cofactor.

It carries out the reaction Hydrolysis of DNA containing ring-opened 7-methylguanine residues, releasing 2,6-diamino-4-hydroxy-5-(N-methyl)formamidopyrimidine.. The enzyme catalyses 2'-deoxyribonucleotide-(2'-deoxyribose 5'-phosphate)-2'-deoxyribonucleotide-DNA = a 3'-end 2'-deoxyribonucleotide-(2,3-dehydro-2,3-deoxyribose 5'-phosphate)-DNA + a 5'-end 5'-phospho-2'-deoxyribonucleoside-DNA + H(+). In terms of biological role, involved in base excision repair of DNA damaged by oxidation or by mutagenic agents. Acts as a DNA glycosylase that recognizes and removes damaged bases. Has a preference for oxidized purines, such as 7,8-dihydro-8-oxoguanine (8-oxoG). Has AP (apurinic/apyrimidinic) lyase activity and introduces nicks in the DNA strand. Cleaves the DNA backbone by beta-delta elimination to generate a single-strand break at the site of the removed base with both 3'- and 5'-phosphates. This Mycoplasma genitalium (strain ATCC 33530 / DSM 19775 / NCTC 10195 / G37) (Mycoplasmoides genitalium) protein is Formamidopyrimidine-DNA glycosylase (mutM).